The primary structure comprises 211 residues: Histidine biosynthesis bifunctional protein HisIE (211 aa).

Residues 1-122 (MSVKAAEVSS…DPQEESQMVW (122 aa)) are phosphoribosyl-AMP cyclohydrolase. A phosphoribosyl-ATP pyrophosphohydrolase region spans residues 123–211 (LHQLEQLLAA…VINKLKERHK (89 aa)).

In the N-terminal section; belongs to the PRA-CH family. This sequence in the C-terminal section; belongs to the PRA-PH family.

The protein resides in the cytoplasm. The catalysed reaction is 1-(5-phospho-beta-D-ribosyl)-ATP + H2O = 1-(5-phospho-beta-D-ribosyl)-5'-AMP + diphosphate + H(+). It carries out the reaction 1-(5-phospho-beta-D-ribosyl)-5'-AMP + H2O = 1-(5-phospho-beta-D-ribosyl)-5-[(5-phospho-beta-D-ribosylamino)methylideneamino]imidazole-4-carboxamide. It participates in amino-acid biosynthesis; L-histidine biosynthesis; L-histidine from 5-phospho-alpha-D-ribose 1-diphosphate: step 2/9. The protein operates within amino-acid biosynthesis; L-histidine biosynthesis; L-histidine from 5-phospho-alpha-D-ribose 1-diphosphate: step 3/9. This is Histidine biosynthesis bifunctional protein HisIE from Vibrio vulnificus (strain YJ016).